Reading from the N-terminus, the 391-residue chain is MSGPVPSRARVYTDVNTHRPREYWDYESHVVEWGNQDDYQLVRKLGRGKYSEVFEAINITNNEKVVVKILKPVKKKKIKREIKILENLRGGPNIITLADIVKDPVSRTPALVFEHVNNTDFKQLYQTLTDYDIRFYMYEILKALDYCHSMGIMHRDVKPHNVMIDHEHRKLRLIDWGLAEFYHPGQEYNVRVASRYFKGPELLVDYQMYDYSLDMWSLGCMLASMIFRKEPFFHGHDNYDQLVRIAKVLGTEDLYDYIDKYNIELDPRFNDILGRHSRKRWERFVHSENQHLVSPEALDFLDKLLRYDHQSRLTAREAMEHPYFYPIVKDQARMGSSNMPGGSTPVSSASMMSGISSVPTPSPLGPLAGSPVISATTTLGMPVPAAAGAQQ.

Positions 36–41 (QDDYQL) are interaction with beta subunit. The region spanning 39–324 (YQLVRKLGRG…AREAMEHPYF (286 aa)) is the Protein kinase domain. ATP is bound by residues 45–53 (LGRGKYSEV) and lysine 68. The active-site Proton acceptor is the aspartate 156. The span at 335–346 (GSSNMPGGSTPV) shows a compositional bias: polar residues. Residues 335-363 (GSSNMPGGSTPVSSASMMSGISSVPTPSP) form a disordered region. The span at 347-357 (SSASMMSGISS) shows a compositional bias: low complexity.

Belongs to the protein kinase superfamily. Ser/Thr protein kinase family. CK2 subfamily. In terms of assembly, tetramer composed of an alpha chain, an alpha' and two beta chains. Interacts with RNPS1.

It localises to the nucleus. The catalysed reaction is L-seryl-[protein] + ATP = O-phospho-L-seryl-[protein] + ADP + H(+). The enzyme catalyses L-threonyl-[protein] + ATP = O-phospho-L-threonyl-[protein] + ADP + H(+). Catalytic subunit of a constitutively active serine/threonine-protein kinase complex that phosphorylates a large number of substrates containing acidic residues C-terminal to the phosphorylated serine or threonine. Regulates numerous cellular processes, such as cell cycle progression, apoptosis and transcription, as well as viral infection. May act as a regulatory node which integrates and coordinates numerous signals leading to an appropriate cellular response. During mitosis, functions as a component of the p53/TP53-dependent spindle assembly checkpoint (SAC) that maintains cyclin-B-CDK1 activity and G2 arrest in response to spindle damage. Can also negatively regulate apoptosis. Phosphorylates the caspases CASP9 and CASP2 and the apoptotic regulator NOL3. Phosphorylation protects CASP9 from cleavage and activation by CASP8, and inhibits the dimerization of CASP2 and activation of CASP8. Plays an important role in the circadian clock function by phosphorylating BMAL1. The protein is Casein kinase II subunit alpha (CSNK2A1) of Gallus gallus (Chicken).